The primary structure comprises 414 residues: 5-aminolevulinate synthase (414 aa).

Substrate-binding residues include Arg22, Ser133, and Lys152. Pyridoxal 5'-phosphate is bound by residues Ser185, His213, and Thr241. Lys244 is a catalytic residue. At Lys244 the chain carries N6-(pyridoxal phosphate)lysine. Pyridoxal 5'-phosphate contacts are provided by Thr273 and Thr274. Position 359 (Thr359) interacts with substrate.

It belongs to the class-II pyridoxal-phosphate-dependent aminotransferase family. In terms of assembly, homodimer. Requires pyridoxal 5'-phosphate as cofactor.

It carries out the reaction succinyl-CoA + glycine + H(+) = 5-aminolevulinate + CO2 + CoA. It functions in the pathway porphyrin-containing compound metabolism; protoporphyrin-IX biosynthesis; 5-aminolevulinate from glycine: step 1/1. In Rickettsia typhi (strain ATCC VR-144 / Wilmington), this protein is 5-aminolevulinate synthase (hemA).